The chain runs to 352 residues: Protein-glutamate methylesterase/protein-glutamine glutaminase 2 (352 aa).

The 116-residue stretch at Met1–Glu116 folds into the Response regulatory domain. 4-aspartylphosphate is present on Asp50. The CheB-type methylesterase domain occupies Ala162 to Gln352. Active-site residues include Ser174, His200, and Asp296.

It belongs to the CheB family. Phosphorylated by CheA. Phosphorylation of the N-terminal regulatory domain activates the methylesterase activity.

It is found in the cytoplasm. The catalysed reaction is [protein]-L-glutamate 5-O-methyl ester + H2O = L-glutamyl-[protein] + methanol + H(+). It carries out the reaction L-glutaminyl-[protein] + H2O = L-glutamyl-[protein] + NH4(+). Functionally, involved in chemotaxis. Part of a chemotaxis signal transduction system that modulates chemotaxis in response to various stimuli. Catalyzes the demethylation of specific methylglutamate residues introduced into the chemoreceptors (methyl-accepting chemotaxis proteins or MCP) by CheR. Also mediates the irreversible deamidation of specific glutamine residues to glutamic acid. In Xanthomonas euvesicatoria pv. vesicatoria (strain 85-10) (Xanthomonas campestris pv. vesicatoria), this protein is Protein-glutamate methylesterase/protein-glutamine glutaminase 2.